A 480-amino-acid polypeptide reads, in one-letter code: Ochratoxinase (480 aa).

The Zn(2+) site is built by His111, His113, Lys246, His287, and His307. Lys246 is an active-site residue. Asp378 is an active-site residue.

Belongs to the metallo-dependent hydrolases superfamily. Ochratoxinase amidase 2 family. Homooctamer. The cofactor is Zn(2+).

Its subcellular location is the secreted. The catalysed reaction is ochratoxin A + H2O = ochratoxin alpha + L-phenylalanine. Its activity is regulated as follows. The Zn(2+)-specific chelator 1,10-phenanthroline inhibits the enzyme activity. Carboxypeptidase that catalyzes the release of a C-terminal amino acid with specific catalytic activity for aromatic amino acids such as phenylalanine. Is able to degrade ochratoxin A, one of the five major mycotoxins most harmful to humans and animals that is produced by Aspergillus and Penicillium species and occurs in a wide range of agricultural products. The polypeptide is Ochratoxinase (Aspergillus niger (strain ATCC 1015 / CBS 113.46 / FGSC A1144 / LSHB Ac4 / NCTC 3858a / NRRL 328 / USDA 3528.7)).